The following is a 266-amino-acid chain: Phosphate import ATP-binding protein PstB 2 (266 aa).

The ABC transporter domain maps to 13 to 252; it reads LEAQGVNVYY…GPTEEIFQNP (240 aa). ATP is bound at residue 45 to 52; that stretch reads GPSGCGKS.

Belongs to the ABC transporter superfamily. Phosphate importer (TC 3.A.1.7) family. In terms of assembly, the complex is composed of two ATP-binding proteins (PstB), two transmembrane proteins (PstC and PstA) and a solute-binding protein (PstS).

The protein resides in the cell inner membrane. The catalysed reaction is phosphate(out) + ATP + H2O = ADP + 2 phosphate(in) + H(+). Functionally, part of the ABC transporter complex PstSACB involved in phosphate import. Responsible for energy coupling to the transport system. This Synechocystis sp. (strain ATCC 27184 / PCC 6803 / Kazusa) protein is Phosphate import ATP-binding protein PstB 2.